The following is a 335-amino-acid chain: Urokinase plasminogen activator surface receptor (335 aa).

An N-terminal signal peptide occupies residues 1–22 (MGHPPLLPLLLLLHTCVPASWG). UPAR/Ly6 domains follow at residues 23 to 114 (LRCM…RSRY), 115 to 213 (LECI…PQNG), and 214 to 305 (RQCY…YRSG). 3 cysteine pairs are disulfide-bonded: cysteine 25–cysteine 46, cysteine 28–cysteine 34, and cysteine 39–cysteine 67. The N-linked (GlcNAc...) asparagine glycan is linked to asparagine 74. Disulfide bonds link cysteine 93–cysteine 98, cysteine 117–cysteine 144, cysteine 120–cysteine 127, cysteine 137–cysteine 169, cysteine 175–cysteine 192, cysteine 193–cysteine 198, cysteine 216–cysteine 244, cysteine 219–cysteine 227, cysteine 237–cysteine 263, cysteine 269–cysteine 287, and cysteine 288–cysteine 293. Asparagine 184, asparagine 194, asparagine 222, and asparagine 255 each carry an N-linked (GlcNAc...) asparagine glycan. Glycine 305 is lipidated: GPI-anchor amidated glycine. Positions 306-335 (AAPQPGPAHLSLTITLLMTARLWGGTLLWT) are cleaved as a propeptide — removed in mature form.

In terms of assembly, monomer. Interacts with MRC2. Interacts (via the UPAR/Ly6 domains) with SRPX2. Interacts with FAP (seprase); the interaction occurs at the cell surface of invadopodia membrane. Interacts with SORL1 (via N-terminal ectodomain); this interaction decreases PLAUR internalization. The ternary complex composed of PLAUR-PLAU-SERPINE1 also interacts with SORL1. Interacts with CD82; this interaction prevents PLAUR from binding to its high affinity ligand PLAU. In terms of tissue distribution, expressed in neurons of the rolandic area of the brain (at protein level). Expressed in the brain.

It localises to the cell membrane. The protein localises to the cell projection. Its subcellular location is the invadopodium membrane. The protein resides in the secreted. Acts as a receptor for urokinase plasminogen activator. Plays a role in localizing and promoting plasmin formation. Mediates the proteolysis-independent signal transduction activation effects of U-PA. It is subject to negative-feedback regulation by U-PA which cleaves it into an inactive form. In Homo sapiens (Human), this protein is Urokinase plasminogen activator surface receptor (PLAUR).